A 714-amino-acid chain; its full sequence is Fatty acid oxidation complex subunit alpha (714 aa).

The enoyl-CoA hydratase stretch occupies residues 1–190; that stretch reads MEMTSAFTLN…KLGLVDDVVP (190 aa). Residues 306-714 form a 3-hydroxyacyl-CoA dehydrogenase region; it reads APLNSVGILG…FWKTTATDLQ (409 aa).

It in the N-terminal section; belongs to the enoyl-CoA hydratase/isomerase family. The protein in the central section; belongs to the 3-hydroxyacyl-CoA dehydrogenase family. Heterotetramer of two alpha chains (FadJ) and two beta chains (FadI).

It is found in the cytoplasm. It carries out the reaction a (3S)-3-hydroxyacyl-CoA = a (2E)-enoyl-CoA + H2O. The catalysed reaction is a 4-saturated-(3S)-3-hydroxyacyl-CoA = a (3E)-enoyl-CoA + H2O. The enzyme catalyses a (3S)-3-hydroxyacyl-CoA + NAD(+) = a 3-oxoacyl-CoA + NADH + H(+). It catalyses the reaction (3S)-3-hydroxybutanoyl-CoA = (3R)-3-hydroxybutanoyl-CoA. It participates in lipid metabolism; fatty acid beta-oxidation. Catalyzes the formation of a hydroxyacyl-CoA by addition of water on enoyl-CoA. Also exhibits 3-hydroxyacyl-CoA epimerase and 3-hydroxyacyl-CoA dehydrogenase activities. The polypeptide is Fatty acid oxidation complex subunit alpha (Escherichia coli O8 (strain IAI1)).